The sequence spans 465 residues: Glucose-1-phosphate adenylyltransferase (465 aa).

Alpha-D-glucose 1-phosphate-binding positions include G164, 181 to 182 (EK), and S199.

It belongs to the bacterial/plant glucose-1-phosphate adenylyltransferase family. In terms of assembly, homotetramer.

It carries out the reaction alpha-D-glucose 1-phosphate + ATP + H(+) = ADP-alpha-D-glucose + diphosphate. Its pathway is glycan biosynthesis; glycogen biosynthesis. Functionally, involved in the biosynthesis of ADP-glucose, a building block required for the elongation reactions to produce glycogen. Catalyzes the reaction between ATP and alpha-D-glucose 1-phosphate (G1P) to produce pyrophosphate and ADP-Glc. This Arthrobacter sp. (strain FB24) protein is Glucose-1-phosphate adenylyltransferase.